The following is a 107-amino-acid chain: UPF0145 protein Ent638_1382 (107 aa).

This sequence belongs to the UPF0145 family.

The polypeptide is UPF0145 protein Ent638_1382 (Enterobacter sp. (strain 638)).